A 321-amino-acid chain; its full sequence is Beta-lactamase (321 aa).

A signal peptide spans 1-30; sequence MEKNRKKQIVVLSIALVCIFILVFSLFHKS. The active-site Acyl-ester intermediate is the Ser-83. 233–235 contributes to the substrate binding site; the sequence is KTG.

The protein belongs to the class-A beta-lactamase family.

It carries out the reaction a beta-lactam + H2O = a substituted beta-amino acid. With respect to regulation, inhibited by clavulanic acid. Can hydrolyze cephalosporins, penicillins and also cefoxitin; but at a slow rate. The protein is Beta-lactamase (cfxA) of Phocaeicola vulgatus (Bacteroides vulgatus).